The following is a 349-amino-acid chain: Dihydroorotase (349 aa).

Residues H17 and H19 each coordinate Zn(2+). Residues 19–21 (HLR) and N45 contribute to the substrate site. Zn(2+)-binding residues include K103, H140, and H178. K103 bears the N6-carboxylysine mark. H140 contributes to the substrate binding site. L224 contributes to the substrate binding site. D252 is a Zn(2+) binding site. D252 is an active-site residue. Substrate-binding residues include H256 and A268.

Belongs to the metallo-dependent hydrolases superfamily. DHOase family. Class II DHOase subfamily. Homodimer. Zn(2+) is required as a cofactor.

It carries out the reaction (S)-dihydroorotate + H2O = N-carbamoyl-L-aspartate + H(+). Its pathway is pyrimidine metabolism; UMP biosynthesis via de novo pathway; (S)-dihydroorotate from bicarbonate: step 3/3. Its function is as follows. Catalyzes the reversible cyclization of carbamoyl aspartate to dihydroorotate. The protein is Dihydroorotase of Buchnera aphidicola subsp. Schizaphis graminum (strain Sg).